The sequence spans 432 residues: Glutamyl-tRNA reductase (432 aa).

Residues 49–52, Ser-109, 114–116, and Gln-120 contribute to the substrate site; these read TCNR and EGQ. Cys-50 acts as the Nucleophile in catalysis. 189–194 lines the NADP(+) pocket; sequence GAGKMS.

Belongs to the glutamyl-tRNA reductase family. As to quaternary structure, homodimer.

The protein localises to the plastid. It localises to the cyanelle. It carries out the reaction (S)-4-amino-5-oxopentanoate + tRNA(Glu) + NADP(+) = L-glutamyl-tRNA(Glu) + NADPH + H(+). It functions in the pathway porphyrin-containing compound metabolism; protoporphyrin-IX biosynthesis; 5-aminolevulinate from L-glutamyl-tRNA(Glu): step 1/2. Its pathway is porphyrin-containing compound metabolism; chlorophyll biosynthesis. Its function is as follows. Catalyzes the NADPH-dependent reduction of glutamyl-tRNA(Glu) to glutamate 1-semialdehyde (GSA). The sequence is that of Glutamyl-tRNA reductase from Cyanophora paradoxa.